Consider the following 694-residue polypeptide: Nuclear factor erythroid 2-related factor 3 (694 aa).

The segment covering 133–150 (ASSTGGAGASVDGGSQAV) has biased composition (low complexity). 2 disordered regions span residues 133–256 (ASST…LNGT) and 330–357 (DPTA…QTLP). Composition is skewed to basic and acidic residues over residues 193–217 (GVLR…RVSA) and 231–254 (NKIA…RHLN). Positions 333-357 (ARTSQSQEPFLQLNSHTTNPEQTLP) are enriched in polar residues. Residues 578-641 (LIRDIRRRGK…NIMKQKLHDL (64 aa)) form the bZIP domain. Residues 580 to 599 (RDIRRRGKNKVAAQNCRKRK) form a basic motif region. The segment at 606–620 (LEDDVCNLQAKKETL) is leucine-zipper.

Belongs to the bZIP family. CNC subfamily. As to quaternary structure, heterodimer with MAFG, MAFK and other small MAF proteins that binds to the MAF recognition elements (MARE). In terms of tissue distribution, highly expressed in human placenta and also in B-cell and monocyte cell lines. Low expression in heart, brain, lung, skeletal muscle, kidney and pancreas.

It is found in the nucleus. In terms of biological role, activates erythroid-specific, globin gene expression. In Homo sapiens (Human), this protein is Nuclear factor erythroid 2-related factor 3 (NFE2L3).